The chain runs to 68 residues: ATP synthase F(0) complex subunit 8 (68 aa).

Residues 8 to 24 (VWPTTITPMLLTLFLIT) form a helical membrane-spanning segment. Position 54 is an N6-acetyllysine; alternate (K54). N6-succinyllysine; alternate is present on K54. K57 bears the N6-acetyllysine mark.

This sequence belongs to the ATPase protein 8 family. Component of the ATP synthase complex composed at least of ATP5F1A/subunit alpha, ATP5F1B/subunit beta, ATP5MC1/subunit c (homooctomer), MT-ATP6/subunit a, MT-ATP8/subunit 8, ATP5ME/subunit e, ATP5MF/subunit f, ATP5MG/subunit g, ATP5MK/subunit k, ATP5MJ/subunit j, ATP5F1C/subunit gamma, ATP5F1D/subunit delta, ATP5F1E/subunit epsilon, ATP5PF/subunit F6, ATP5PB/subunit b, ATP5PD/subunit d, ATP5PO/subunit OSCP. ATP synthase complex consists of a soluble F(1) head domain (subunits alpha(3) and beta(3)) - the catalytic core - and a membrane F(0) domain - the membrane proton channel (subunits c, a, 8, e, f, g, k and j). These two domains are linked by a central stalk (subunits gamma, delta, and epsilon) rotating inside the F1 region and a stationary peripheral stalk (subunits F6, b, d, and OSCP). Interacts with PRICKLE3.

It is found in the mitochondrion membrane. In terms of biological role, subunit 8, of the mitochondrial membrane ATP synthase complex (F(1)F(0) ATP synthase or Complex V) that produces ATP from ADP in the presence of a proton gradient across the membrane which is generated by electron transport complexes of the respiratory chain. ATP synthase complex consist of a soluble F(1) head domain - the catalytic core - and a membrane F(1) domain - the membrane proton channel. These two domains are linked by a central stalk rotating inside the F(1) region and a stationary peripheral stalk. During catalysis, ATP synthesis in the catalytic domain of F(1) is coupled via a rotary mechanism of the central stalk subunits to proton translocation. In vivo, can only synthesize ATP although its ATP hydrolase activity can be activated artificially in vitro. Part of the complex F(0) domain. In Pan paniscus (Pygmy chimpanzee), this protein is ATP synthase F(0) complex subunit 8.